Reading from the N-terminus, the 174-residue chain is Methionine-R-sulfoxide reductase B2, mitochondrial (174 aa).

Residues M1 to K61 constitute a mitochondrion transit peptide. Positions G62 to S172 constitute a MsrB domain. Zn(2+)-binding residues include C82, C85, C138, and C141. C161 serves as the catalytic Nucleophile.

It belongs to the MsrB Met sulfoxide reductase family. Requires Zn(2+) as cofactor.

The protein resides in the mitochondrion. It carries out the reaction L-methionyl-[protein] + [thioredoxin]-disulfide + H2O = L-methionyl-(R)-S-oxide-[protein] + [thioredoxin]-dithiol. It catalyses the reaction [thioredoxin]-disulfide + L-methionine + H2O = L-methionine (R)-S-oxide + [thioredoxin]-dithiol. Functionally, methionine-sulfoxide reductase that specifically reduces methionine (R)-sulfoxide back to methionine. While in many cases, methionine oxidation is the result of random oxidation following oxidative stress, methionine oxidation is also a post-translational modification that takes place on specific residue. Upon oxidative stress, may play a role in the preservation of mitochondrial integrity by decreasing the intracellular reactive oxygen species build-up through its scavenging role, hence contributing to cell survival and protein maintenance. This is Methionine-R-sulfoxide reductase B2, mitochondrial (Msrb2) from Rattus norvegicus (Rat).